A 152-amino-acid chain; its full sequence is Deoxyuridine 5'-triphosphate nucleotidohydrolase (152 aa).

Residues 71 to 73 (RSG), N84, 88 to 90 (LID), and M98 contribute to the substrate site.

Belongs to the dUTPase family. The cofactor is Mg(2+).

It carries out the reaction dUTP + H2O = dUMP + diphosphate + H(+). The protein operates within pyrimidine metabolism; dUMP biosynthesis; dUMP from dCTP (dUTP route): step 2/2. Its function is as follows. This enzyme is involved in nucleotide metabolism: it produces dUMP, the immediate precursor of thymidine nucleotides and it decreases the intracellular concentration of dUTP so that uracil cannot be incorporated into DNA. This Serratia proteamaculans (strain 568) protein is Deoxyuridine 5'-triphosphate nucleotidohydrolase.